The primary structure comprises 156 residues: 3-hydroxyacyl-[acyl-carrier-protein] dehydratase FabZ (156 aa).

Histidine 61 is an active-site residue.

This sequence belongs to the thioester dehydratase family. FabZ subfamily.

The protein localises to the cytoplasm. The catalysed reaction is a (3R)-hydroxyacyl-[ACP] = a (2E)-enoyl-[ACP] + H2O. Involved in unsaturated fatty acids biosynthesis. Catalyzes the dehydration of short chain beta-hydroxyacyl-ACPs and long chain saturated and unsaturated beta-hydroxyacyl-ACPs. This chain is 3-hydroxyacyl-[acyl-carrier-protein] dehydratase FabZ, found in Acaryochloris marina (strain MBIC 11017).